A 122-amino-acid chain; its full sequence is Large ribosomal subunit protein uL14 (122 aa).

The protein belongs to the universal ribosomal protein uL14 family. In terms of assembly, part of the 50S ribosomal subunit. Forms a cluster with proteins L3 and L19. In the 70S ribosome, L14 and L19 interact and together make contacts with the 16S rRNA in bridges B5 and B8.

In terms of biological role, binds to 23S rRNA. Forms part of two intersubunit bridges in the 70S ribosome. This chain is Large ribosomal subunit protein uL14, found in Dehalococcoides mccartyi (strain ATCC BAA-2266 / KCTC 15142 / 195) (Dehalococcoides ethenogenes (strain 195)).